We begin with the raw amino-acid sequence, 150 residues long: Large ribosomal subunit protein uL13 (150 aa).

This sequence belongs to the universal ribosomal protein uL13 family. As to quaternary structure, part of the 50S ribosomal subunit.

Functionally, this protein is one of the early assembly proteins of the 50S ribosomal subunit, although it is not seen to bind rRNA by itself. It is important during the early stages of 50S assembly. This Persephonella marina (strain DSM 14350 / EX-H1) protein is Large ribosomal subunit protein uL13.